The chain runs to 209 residues: ATP-dependent Clp protease proteolytic subunit (209 aa).

Ser103 serves as the catalytic Nucleophile. The active site involves His128.

The protein belongs to the peptidase S14 family. As to quaternary structure, fourteen ClpP subunits assemble into 2 heptameric rings which stack back to back to give a disk-like structure with a central cavity, resembling the structure of eukaryotic proteasomes.

Its subcellular location is the cytoplasm. The enzyme catalyses Hydrolysis of proteins to small peptides in the presence of ATP and magnesium. alpha-casein is the usual test substrate. In the absence of ATP, only oligopeptides shorter than five residues are hydrolyzed (such as succinyl-Leu-Tyr-|-NHMec, and Leu-Tyr-Leu-|-Tyr-Trp, in which cleavage of the -Tyr-|-Leu- and -Tyr-|-Trp bonds also occurs).. Its function is as follows. Cleaves peptides in various proteins in a process that requires ATP hydrolysis. Has a chymotrypsin-like activity. Plays a major role in the degradation of misfolded proteins. In Lawsonia intracellularis (strain PHE/MN1-00), this protein is ATP-dependent Clp protease proteolytic subunit.